Here is a 159-residue protein sequence, read N- to C-terminus: Small ribosomal subunit protein uS15 (159 aa).

Residues 1 to 16 show a composition bias toward basic residues; that stretch reads MNKRKEKGKSHSKRPV. A disordered region spans residues 1 to 22; the sequence is MNKRKEKGKSHSKRPVRNTPPR.

This sequence belongs to the universal ribosomal protein uS15 family. Part of the 30S ribosomal subunit.

This Ignicoccus hospitalis (strain KIN4/I / DSM 18386 / JCM 14125) protein is Small ribosomal subunit protein uS15.